Here is a 179-residue protein sequence, read N- to C-terminus: D-glycero-beta-D-manno-heptose-1,7-bisphosphate 7-phosphatase (179 aa).

The active-site Nucleophile is the Asp-7. The Mg(2+) site is built by Asp-7 and Asp-9. Position 7 (Asp-7) interacts with substrate. Asp-9 acts as the Proton donor in catalysis. Substrate-binding positions include 15–19 (DSDAF), 50–53 (TNQS), and Arg-57. Cys-89, His-91, Cys-97, and Cys-99 together coordinate Zn(2+). Substrate is bound at residue Arg-100. Asp-126 lines the Mg(2+) pocket. Residue Arg-129 participates in substrate binding.

In terms of assembly, monomer. It depends on Mg(2+) as a cofactor. Zn(2+) serves as cofactor.

The protein resides in the cytoplasm. It carries out the reaction D-glycero-beta-D-manno-heptose 1,7-bisphosphate + H2O = D-glycero-beta-D-manno-heptose 1-phosphate + phosphate. The protein operates within nucleotide-sugar biosynthesis; ADP-L-glycero-beta-D-manno-heptose biosynthesis; ADP-L-glycero-beta-D-manno-heptose from D-glycero-beta-D-manno-heptose 7-phosphate: step 2/4. It participates in bacterial outer membrane biogenesis; LPS core biosynthesis. Its function is as follows. Converts the D-glycero-beta-D-manno-heptose 1,7-bisphosphate (beta-HBP) intermediate into D-glycero-beta-D-manno-heptose 1-phosphate by removing the phosphate group at the C-7 position. This is D-glycero-beta-D-manno-heptose-1,7-bisphosphate 7-phosphatase from Bordetella bronchiseptica (strain ATCC BAA-588 / NCTC 13252 / RB50) (Alcaligenes bronchisepticus).